A 264-amino-acid polypeptide reads, in one-letter code: Type II iodothyronine deiodinase (264 aa).

Over 1 to 7 (MGLLSVD) the chain is Lumenal. The helical; Signal-anchor for type III membrane protein transmembrane segment at 8–28 (LLITLQILPGFFSNCLFLALY) threads the bilayer. The Cytoplasmic segment spans residues 29 to 264 (DSVVLVKHVL…AESGQTGTEK (236 aa)). Residue U124 is part of the active site. Position 124 (U124) is a non-standard amino acid, selenocysteine.

This sequence belongs to the iodothyronine deiodinase family. Predominantly monomer. Can form homodimers but homodimerization is not essential for enzyme activity. High levels seen in the metamorphosing tail.

Its subcellular location is the endoplasmic reticulum membrane. The catalysed reaction is 3,3',5-triiodo-L-thyronine + iodide + A + H(+) = L-thyroxine + AH2. It catalyses the reaction 3,3'-diiodo-L-thyronine + iodide + A + H(+) = 3,3',5'-triiodo-L-thyronine + AH2. The enzyme catalyses 3'-iodo-L-thyronine + iodide + A + H(+) = 3',5'-diiodo-L-thyronine + AH2. It carries out the reaction 3,3'-diiodothyronamine + iodide + A + H(+) = 3,3',5'-triiodothyronamine + AH2. The catalysed reaction is 3'-iodothyronamine + iodide + A + H(+) = 3',5'-diiodothyronamine + AH2. With respect to regulation, not inhibited by N(6)-propylthiouracil. In terms of biological role, plays a crucial role in the metabolism of thyroid hormones (TH) and has specific roles in TH activation and inactivation by deiodination. Catalyzes the deiodination of L-thyroxine (T4) to 3,5,3'-triiodothyronine (T3) and 3',5'-diiodothyronine (3',5'-T2) to 3'-monoiodothyronine (3'-T1) via outer-ring deiodination (ORD). Catalyzes the deiodination of 3,3',5'-triiodothyronine (rT3) to 3,3'-diiodothyronine (3,3'-T2) via ORD. Catalyzes the phenolic ring deiodinations of 3,3',5'-triiodothyronamine and 3',5'- diiodothyronamine. The chain is Type II iodothyronine deiodinase (dio2) from Aquarana catesbeiana (American bullfrog).